Here is a 1542-residue protein sequence, read N- to C-terminus: Pleiotropic ABC efflux transporter of multiple drugs PDH1 (1542 aa).

Residues 1-14 (MNTPDDSSVSSVDS) are compositionally biased toward low complexity. The segment at 1–61 (MNTPDDSSVS…APADGSAPLD (61 aa)) is disordered. At 1-517 (MNTPDDSSVS…LIRNFWRIKN (517 aa)) the chain is on the cytoplasmic side. Basic and acidic residues predominate over residues 24–33 (NVEKRIRELA). Residues 35–47 (SLTQQSLTSSNRS) show a composition bias toward polar residues. One can recognise an ABC transporter 1 domain in the interval 153–409 (VKLLNAVWRK…FQKMGYFCPK (257 aa)). 6 helical membrane-spanning segments follow: residues 518-540 (SASVTLFQVFGNSAMAFILGSMF), 552-574 (FYFRGAAMFFAILFNAFSSLLEI), 603-625 (VISEIPPKIVTAILFNIIFYFLV), 634-652 (FFFYFLINVIAVFAMSHLF), 662-684 (LQEAMVPASMLLLALSMYTGFAI), and 773-792 (GFGVGMAYVIFFFFVYLILC). At 793–1220 (EFNEGAKQKG…LFQQYWRTPD (428 aa)) the chain is on the cytoplasmic side. A compositionally biased stretch (basic and acidic residues) spans 825–834 (TKMHTDKNDI). The tract at residues 825-846 (TKMHTDKNDIENNSESITSNAT) is disordered. Over residues 835–846 (ENNSESITSNAT) the composition is skewed to polar residues. Residues 885 to 1128 (FHWQNLCYDV…MIKYFEDHGA (244 aa)) enclose the ABC transporter 2 domain. Position 921–928 (921–928 (GASGAGKT)) interacts with ATP. The next 6 membrane-spanning stretches (helical) occupy residues 1221–1241 (YLWSKYILTIFNQLFIGFTFF), 1256–1276 (SIFMYTVIFNPLLQQYLPTFV), 1296–1316 (AFILAQIVVEVPWNIVAGTLA), 1342–1362 (LFWLFSIAFYVYVGSLGLFVI), 1370–1390 (TAAHIGSLMFTMALSFCGVMA), and 1495–1515 (GIFICFIVFDYVAGIFLYWLA). The Cytoplasmic portion of the chain corresponds to 1516-1542 (RVPKTNGKIAKNGKTAKVNFIRRLIPF).

It belongs to the ABC transporter superfamily. ABCG family. PDR (TC 3.A.1.205) subfamily. Post-translationally, phosphorylated by PKA. Dephosphorylated on glucose depletion and independently rephosphorylated during glucose exposure or under stress.

Its subcellular location is the cell membrane. In terms of biological role, pleiotropic ABC efflux transporter that confers resistance to structurally and functionally unrelated compounds including caspofungin or azoles such as fluconazole, itraconazole, posaconazole, voriconazole, and isavuconazole. Does not play a role in the azole resistance in mature biofilms. This Candida glabrata (strain ATCC 2001 / BCRC 20586 / JCM 3761 / NBRC 0622 / NRRL Y-65 / CBS 138) (Yeast) protein is Pleiotropic ABC efflux transporter of multiple drugs PDH1.